Here is a 1770-residue protein sequence, read N- to C-terminus: Transposon Ty2-DR3 Gag-Pol polyprotein (1770 aa).

Composition is skewed to polar residues over residues 1–11 (MESQQLHQNPH), 19–39 (ASVTSKEVPSNQDPLAVSASN), 49–60 (KVNSQQETTPGT), 366–390 (VSRTSPNTTNTKVTSRNYHRTNSSK), 399–408 (IATSSKFSRV), and 415–435 (ESTVSSQYLSDDNELSLGQQQ). 2 disordered regions span residues 1-89 (MESQ…QQHG) and 355-449 (SQYK…SNDE). The segment at 295-397 (ENNINVSDRL…SSKPRAAKAH (103 aa)) is RNA-binding. Asp-457 (for protease activity; shared with dimeric partner) is an active-site residue. An integrase-type zinc finger-like region spans residues 579 to 636 (NVNKSKSVNKYPYPLIHRMLGHANFRSIQKSLKKNAVTYLKESDIEWSNASTYQCPDC). In terms of domain architecture, Integrase catalytic spans 656–831 (ESYEPFQYLH…AGLDITTILP (176 aa)). 2 residues coordinate Mg(2+): Asp-667 and Asp-732. Disordered regions lie at residues 1005 to 1038 (GGTIESDTTSPRHSSTFTARNQKRPGSPNDMIDL) and 1057 to 1205 (GGTE…TEIE). 2 stretches are compositionally biased toward polar residues: residues 1009–1024 (ESDTTSPRHSSTFTAR) and 1065–1082 (QRNSDTNIKYRTTNSTPS). The Bipartite nuclear localization signal motif lies at 1193–1227 (KKRSLEDNETEIEVSRDTWNNKNMRSLEPPRSKKR). The region spanning 1353–1491 (NDYYITQLDI…DILGLEIKYQ (139 aa)) is the Reverse transcriptase Ty1/copia-type domain. The Mg(2+) site is built by Asp-1361, Asp-1442, Asp-1443, Asp-1625, Glu-1667, and Asp-1700. Residues 1625–1767 (DASYGNQPYY…IKTFKLLTNK (143 aa)) enclose the RNase H Ty1/copia-type domain.

As to quaternary structure, the capsid protein forms a homotrimer, from which the VLPs are assembled. The protease is a homodimer, whose active site consists of two apposed aspartic acid residues. Post-translationally, initially, virus-like particles (VLPs) are composed of the structural unprocessed proteins Gag and Gag-Pol, and also contain the host initiator methionine tRNA (tRNA(i)-Met) which serves as a primer for minus-strand DNA synthesis, and a dimer of genomic Ty RNA. Processing of the polyproteins occurs within the particle and proceeds by an ordered pathway, called maturation. First, the protease (PR) is released by autocatalytic cleavage of the Gag-Pol polyprotein, and this cleavage is a prerequisite for subsequent processing at the remaining sites to release the mature structural and catalytic proteins. Maturation takes place prior to the RT reaction and is required to produce transposition-competent VLPs.

The protein resides in the cytoplasm. It is found in the nucleus. It catalyses the reaction DNA(n) + a 2'-deoxyribonucleoside 5'-triphosphate = DNA(n+1) + diphosphate. The catalysed reaction is Endonucleolytic cleavage to 5'-phosphomonoester.. Functionally, capsid protein (CA) is the structural component of the virus-like particle (VLP), forming the shell that encapsulates the retrotransposons dimeric RNA genome. The particles are assembled from trimer-clustered units and there are holes in the capsid shells that allow for the diffusion of macromolecules. CA also has nucleocapsid-like chaperone activity, promoting primer tRNA(i)-Met annealing to the multipartite primer-binding site (PBS), dimerization of Ty2 RNA and initiation of reverse transcription. The aspartyl protease (PR) mediates the proteolytic cleavages of the Gag and Gag-Pol polyproteins after assembly of the VLP. In terms of biological role, reverse transcriptase/ribonuclease H (RT) is a multifunctional enzyme that catalyzes the conversion of the retro-elements RNA genome into dsDNA within the VLP. The enzyme displays a DNA polymerase activity that can copy either DNA or RNA templates, and a ribonuclease H (RNase H) activity that cleaves the RNA strand of RNA-DNA heteroduplexes during plus-strand synthesis and hydrolyzes RNA primers. The conversion leads to a linear dsDNA copy of the retrotransposon that includes long terminal repeats (LTRs) at both ends. Its function is as follows. Integrase (IN) targets the VLP to the nucleus, where a subparticle preintegration complex (PIC) containing at least integrase and the newly synthesized dsDNA copy of the retrotransposon must transit the nuclear membrane. Once in the nucleus, integrase performs the integration of the dsDNA into the host genome. The chain is Transposon Ty2-DR3 Gag-Pol polyprotein (TY2B-DR3) from Saccharomyces cerevisiae (strain ATCC 204508 / S288c) (Baker's yeast).